The following is a 320-amino-acid chain: Cytochrome f (320 aa).

An N-terminal signal peptide occupies residues 1–35; it reads MQNRNTFSWVKEQMTRFISVSIMIYVITRTSISNA. Tyr36, Cys56, Cys59, and His60 together coordinate heme. A helical membrane pass occupies residues 286–306; that stretch reads VQGLLFFLASVILAQIFLVLK.

Belongs to the cytochrome f family. As to quaternary structure, the 4 large subunits of the cytochrome b6-f complex are cytochrome b6, subunit IV (17 kDa polypeptide, petD), cytochrome f and the Rieske protein, while the 4 small subunits are PetG, PetL, PetM and PetN. The complex functions as a dimer. Requires heme as cofactor.

The protein localises to the plastid. Its subcellular location is the chloroplast thylakoid membrane. Component of the cytochrome b6-f complex, which mediates electron transfer between photosystem II (PSII) and photosystem I (PSI), cyclic electron flow around PSI, and state transitions. In Drimys granadensis, this protein is Cytochrome f.